We begin with the raw amino-acid sequence, 505 residues long: MTEQKYIVALDQGTTSSRAVILDHDANIVSVAQREFTQIYPQAGWVEHDPMEIWATQSSTLVEALAKSGIRSDQLAAIGITNQRETTIVWNKETGKPVYNAIVWQCRRTADICEDLKSRGLEDYVRDNTGLVLDPYFSGTKVKWILDNVEGAREDAEAGKLLFGTVDTWLVWKMTQGRVHVTDYTNASRTMLFNINDLCWDQKLLDEMGIPASMMPEVKRSSEIYGKTNIGGKGGTRIPIAGIAGDQQAALYGQMCVEAGQAKNTYGTGCFLLMNTGQEKVTSKNGLLTTLACGPKGEPAYALEGAVFMGGASIQWLRDELKILNGAEDSEYFATKVDTSNGVYVVPAFTGLGAPYWDAYARGTIVGLTRGVNSNHIIRATLEGIAYQTRDVLDAMQADSGIKLANLRVDGGAVANNFLMQFQSDVLNTEVHRPQVTEVTALGAAYLAGLAVGYWNSIDELQDKAVLDRTFEPHDDEEKRNRRYKGWKRAVKCAQTWSELHDEDD.

Threonine 14 is an ADP binding site. 3 residues coordinate ATP: threonine 14, threonine 15, and serine 16. Threonine 14 is a sn-glycerol 3-phosphate binding site. Arginine 18 serves as a coordination point for ADP. Sn-glycerol 3-phosphate is bound by residues arginine 84, glutamate 85, tyrosine 136, and aspartate 246. Glycerol contacts are provided by arginine 84, glutamate 85, tyrosine 136, aspartate 246, and glutamine 247. ADP-binding residues include threonine 268 and glycine 311. The ATP site is built by threonine 268, glycine 311, glutamine 315, and glycine 412. Positions 412 and 416 each coordinate ADP.

It belongs to the FGGY kinase family.

It carries out the reaction glycerol + ATP = sn-glycerol 3-phosphate + ADP + H(+). It participates in polyol metabolism; glycerol degradation via glycerol kinase pathway; sn-glycerol 3-phosphate from glycerol: step 1/1. With respect to regulation, inhibited by fructose 1,6-bisphosphate (FBP). Key enzyme in the regulation of glycerol uptake and metabolism. Catalyzes the phosphorylation of glycerol to yield sn-glycerol 3-phosphate. In Vibrio parahaemolyticus serotype O3:K6 (strain RIMD 2210633), this protein is Glycerol kinase.